Consider the following 417-residue polypeptide: Cotranscriptional regulator ARB2A (417 aa).

The signal sequence occupies residues 1 to 18 (MSISLSSLIFLPIWINMA). N-linked (GlcNAc...) asparagine glycosylation is present at Asn26. Positions 208 to 248 (KQKMHKQSSSSDGTDEPAGKRERRDKVSKETKKRRDFYEKY) are disordered. Over residues 224-237 (PAGKRERRDKVSKE) the composition is skewed to basic and acidic residues. The Nucleophile role is filled by Ser294. The interval 398 to 417 (SSSQKPALTRRSHRIKHEEL) is disordered. Over residues 405-417 (LTRRSHRIKHEEL) the composition is skewed to basic residues. The short motif at 414-417 (HEEL) is the Prevents secretion from ER element.

It belongs to the ARB2A family. In terms of assembly, interacts with AGO2. Found in a complex, composed of AGO2, CHD7 and ARB2A.

Its subcellular location is the nucleus. The protein localises to the cytoplasm. It localises to the endoplasmic reticulum. Plays a role in the regulation of alternative splicing, by interacting with AGO2 and CHD7. Seems to be required for stabilizing protein-protein interactions at the chromatin-spliceosome interface. May have hydrolase activity. The chain is Cotranscriptional regulator ARB2A (Arb2a) from Mus musculus (Mouse).